The primary structure comprises 486 residues: H2.0-like homeobox protein (486 aa).

2 disordered regions span residues Ala83 to Asp173 and Lys330 to Leu486. Positions Gln125–Gln135 are enriched in low complexity. The segment at residues Arg276 to Lys335 is a DNA-binding region (homeobox). 2 stretches are compositionally biased toward basic and acidic residues: residues Ser334–Glu349 and Glu363–Gly372. Over residues Glu373–Ser383 the composition is skewed to acidic residues. A compositionally biased stretch (basic and acidic residues) spans Asp390–Leu401. Residues Ala409 to Ser420 are compositionally biased toward low complexity. A compositionally biased stretch (gly residues) spans Gly421–Ser440. Residues Ser441–Lys474 are compositionally biased toward low complexity. A compositionally biased stretch (pro residues) spans Ser475–Leu486.

The protein belongs to the H2.0 homeobox family.

It is found in the nucleus. Its function is as follows. Transcription factor required for TBX21/T-bet-dependent maturation of Th1 cells as well as maintenance of Th1-specific gene expression. Involved in embryogenesis and hematopoiesis. The sequence is that of H2.0-like homeobox protein (HLX) from Bos taurus (Bovine).